The chain runs to 286 residues: Bifunctional protein FolD (286 aa).

Residues 166 to 168 (GAS) and I232 contribute to the NADP(+) site.

The protein belongs to the tetrahydrofolate dehydrogenase/cyclohydrolase family. In terms of assembly, homodimer.

The catalysed reaction is (6R)-5,10-methylene-5,6,7,8-tetrahydrofolate + NADP(+) = (6R)-5,10-methenyltetrahydrofolate + NADPH. It carries out the reaction (6R)-5,10-methenyltetrahydrofolate + H2O = (6R)-10-formyltetrahydrofolate + H(+). Its pathway is one-carbon metabolism; tetrahydrofolate interconversion. Its function is as follows. Catalyzes the oxidation of 5,10-methylenetetrahydrofolate to 5,10-methenyltetrahydrofolate and then the hydrolysis of 5,10-methenyltetrahydrofolate to 10-formyltetrahydrofolate. The protein is Bifunctional protein FolD of Vibrio campbellii (strain ATCC BAA-1116).